A 108-amino-acid polypeptide reads, in one-letter code: UPF0102 protein Sama_3355 (108 aa).

Belongs to the UPF0102 family.

The chain is UPF0102 protein Sama_3355 from Shewanella amazonensis (strain ATCC BAA-1098 / SB2B).